Here is a 426-residue protein sequence, read N- to C-terminus: Enolase (426 aa).

Residues 38–60 (PSGASTGAHEAVEKRDGDKSRYG) form a disordered region. A compositionally biased stretch (basic and acidic residues) spans 47 to 58 (EAVEKRDGDKSR). Glutamine 163 contacts (2R)-2-phosphoglycerate. Glutamate 205 (proton donor) is an active-site residue. Residues aspartate 242, glutamate 285, and aspartate 312 each coordinate Mg(2+). 4 residues coordinate (2R)-2-phosphoglycerate: lysine 337, arginine 366, serine 367, and lysine 388. Residue lysine 337 is the Proton acceptor of the active site.

The protein belongs to the enolase family. Mg(2+) serves as cofactor.

The protein localises to the cytoplasm. It localises to the secreted. Its subcellular location is the cell surface. The catalysed reaction is (2R)-2-phosphoglycerate = phosphoenolpyruvate + H2O. The protein operates within carbohydrate degradation; glycolysis; pyruvate from D-glyceraldehyde 3-phosphate: step 4/5. Its function is as follows. Catalyzes the reversible conversion of 2-phosphoglycerate (2-PG) into phosphoenolpyruvate (PEP). It is essential for the degradation of carbohydrates via glycolysis. The chain is Enolase from Caulobacter sp. (strain K31).